A 532-amino-acid chain; its full sequence is BEL1-like homeodomain protein 6 (532 aa).

The tract at residues 144–160 is SR/KY domain; it reads SKYLKAAQQLLDEAVNV. Positions 170–203 are disordered; it reads EGDKNNENPQEPNQSTQDSSTNPPADISQSERQE. Polar residues predominate over residues 176-197; sequence ENPQEPNQSTQDSSTNPPADIS. Residues 200–271 are BELL domain; the sequence is ERQEMQSKLT…SLRDAISGQI (72 aa). A DNA-binding region (homeobox) is located at residues 314–376; it reads AWRPQRGLPE…NARVRLWKPM (63 aa). The interval 385–434 is disordered; sequence FTENDSNSSSENTPKMSEIGPVAADDEDRAREFSQDQTKPDHGHGYGEET. Basic and acidic residues predominate over residues 412-434; the sequence is DRAREFSQDQTKPDHGHGYGEET.

Belongs to the TALE/BELL homeobox family. As to quaternary structure, may form heterodimeric complexes with TALE/KNOX proteins. Interacts with OFP2, OFP4, and OFP5.

Its subcellular location is the nucleus. This chain is BEL1-like homeodomain protein 6 (BLH6), found in Arabidopsis thaliana (Mouse-ear cress).